The following is a 232-amino-acid chain: Phosphatidylserine decarboxylase proenzyme (232 aa).

Ser190 (schiff-base intermediate with substrate; via pyruvic acid) is an active-site residue. At Ser190 the chain carries Pyruvic acid (Ser); by autocatalysis.

The protein belongs to the phosphatidylserine decarboxylase family. PSD-A subfamily. Heterodimer of a large membrane-associated beta subunit and a small pyruvoyl-containing alpha subunit. Requires pyruvate as cofactor. Is synthesized initially as an inactive proenzyme. Formation of the active enzyme involves a self-maturation process in which the active site pyruvoyl group is generated from an internal serine residue via an autocatalytic post-translational modification. Two non-identical subunits are generated from the proenzyme in this reaction, and the pyruvate is formed at the N-terminus of the alpha chain, which is derived from the carboxyl end of the proenzyme. The post-translation cleavage follows an unusual pathway, termed non-hydrolytic serinolysis, in which the side chain hydroxyl group of the serine supplies its oxygen atom to form the C-terminus of the beta chain, while the remainder of the serine residue undergoes an oxidative deamination to produce ammonia and the pyruvoyl prosthetic group on the alpha chain.

It localises to the cell membrane. The catalysed reaction is a 1,2-diacyl-sn-glycero-3-phospho-L-serine + H(+) = a 1,2-diacyl-sn-glycero-3-phosphoethanolamine + CO2. Its pathway is phospholipid metabolism; phosphatidylethanolamine biosynthesis; phosphatidylethanolamine from CDP-diacylglycerol: step 2/2. In terms of biological role, catalyzes the formation of phosphatidylethanolamine (PtdEtn) from phosphatidylserine (PtdSer). Important for establishment of root nodule symbiosis with the host plant. This Rhizobium meliloti (strain 1021) (Ensifer meliloti) protein is Phosphatidylserine decarboxylase proenzyme.